The primary structure comprises 220 residues: V-set and transmembrane domain-containing protein 2-like protein (220 aa).

The first 24 residues, 1–24, serve as a signal peptide directing secretion; sequence MGAPLAAALGALHYLALFLQLGGA. The Ig-like domain maps to 41–158; sequence ALFTETPHDM…DGGRGVPRVL (118 aa). Cysteines 62 and 142 form a disulfide. Over residues 165–180 the composition is skewed to pro residues; sequence PAPPRAPRPRGQPPGE. Residues 165 to 220 form a disordered region; the sequence is PAPPRAPRPRGQPPGEEPGRGPTLLFLIILPGTGSGTPREAEPHQPHAGGCPARQS.

This chain is V-set and transmembrane domain-containing protein 2-like protein (Vstm2l), found in Mus musculus (Mouse).